The following is a 148-amino-acid chain: Caltractin (148 aa).

EF-hand domains are found at residues 4 to 39 (EQKQ…LGFE), 40 to 75 (PKKE…KMGE), 77 to 112 (DSRE…LGEN), and 113 to 148 (MTDE…TSLF). Positions 17, 19, 21, 23, 28, 53, 55, 57, 59, and 64 each coordinate Ca(2+). Ca(2+) is bound by residues Asp-126, Asp-128, Asp-130, Glu-132, and Glu-137.

Belongs to the centrin family. In terms of tissue distribution, ubiquitous.

In terms of biological role, this calcium-binding protein is found in the basal body complexes (the functional homolog of the centrosome in animal cell). In mitotic cells it is specifically associated with the poles of the mitotic spindles at the sites of the duplicated basal body complexes. The protein is Caltractin of Tetraselmis striata (Green microalga).